The following is a 400-amino-acid chain: uncharacterized protein (400 aa).

This sequence to M.jannaschii MJ1544 and MJ1637.

This is an uncharacterized protein from Haemophilus influenzae (strain ATCC 51907 / DSM 11121 / KW20 / Rd).